We begin with the raw amino-acid sequence, 121 residues long: Ribosome-binding factor A (121 aa).

Belongs to the RbfA family. In terms of assembly, monomer. Binds 30S ribosomal subunits, but not 50S ribosomal subunits or 70S ribosomes.

It localises to the cytoplasm. In terms of biological role, one of several proteins that assist in the late maturation steps of the functional core of the 30S ribosomal subunit. Associates with free 30S ribosomal subunits (but not with 30S subunits that are part of 70S ribosomes or polysomes). Required for efficient processing of 16S rRNA. May interact with the 5'-terminal helix region of 16S rRNA. This chain is Ribosome-binding factor A, found in Clostridium kluyveri (strain NBRC 12016).